A 334-amino-acid polypeptide reads, in one-letter code: Probable allantoicase (334 aa).

The protein belongs to the allantoicase family.

It carries out the reaction allantoate + H2O = (S)-ureidoglycolate + urea. It functions in the pathway nitrogen metabolism; (S)-allantoin degradation; (S)-ureidoglycolate from allantoate (aminidohydrolase route): step 1/1. The chain is Probable allantoicase from Acinetobacter baylyi (strain ATCC 33305 / BD413 / ADP1).